The chain runs to 98 residues: MEKIVGFIVNIINVQKQMIKDLKELKNHKDIMVKDHEKLNDMLNSMIDEAVKNYKIALKNITEILNVHLNCVLYNHNLKCGVKDEKLLLPLFKRKKAS.

This is an uncharacterized protein from Ureaplasma parvum serovar 3 (strain ATCC 700970).